An 838-amino-acid chain; its full sequence is Translation initiation factor IF-2 (838 aa).

The segment at 50–108 (VQSGKKPESPEKKDIKQNTQKEAPETQTQQKPIEQEVETKQNIDSTPIKVEPKQESLAS) is disordered. Residues 54 to 65 (KKPESPEKKDIK) are compositionally biased toward basic and acidic residues. Over residues 66–81 (QNTQKEAPETQTQQKP) the composition is skewed to polar residues. Positions 337-506 (SRAPVVTIMG…LLQAELLELK (170 aa)) constitute a tr-type G domain. Residues 346-353 (GHVDHGKT) are G1. 346–353 (GHVDHGKT) provides a ligand contact to GTP. The tract at residues 371–375 (GITQH) is G2. Residues 392 to 395 (DTPG) form a G3 region. GTP contacts are provided by residues 392–396 (DTPGH) and 446–449 (NKMD). The interval 446-449 (NKMD) is G4. The segment at 482–484 (SAK) is G5.

The protein belongs to the TRAFAC class translation factor GTPase superfamily. Classic translation factor GTPase family. IF-2 subfamily.

It localises to the cytoplasm. One of the essential components for the initiation of protein synthesis. Protects formylmethionyl-tRNA from spontaneous hydrolysis and promotes its binding to the 30S ribosomal subunits. Also involved in the hydrolysis of GTP during the formation of the 70S ribosomal complex. The chain is Translation initiation factor IF-2 from Campylobacter fetus subsp. fetus (strain 82-40).